We begin with the raw amino-acid sequence, 528 residues long: GMP synthase [glutamine-hydrolyzing] (528 aa).

The Glutamine amidotransferase type-1 domain maps to 13–204 (AIVILDFGSQ…VYHICGCEPD (192 aa)). Residue cysteine 90 is the Nucleophile of the active site. Residues histidine 178 and glutamate 180 contribute to the active site. Residues 205-403 (WTTTAFIEEA…LGLPEEIVRR (199 aa)) form the GMPS ATP-PPase domain. 232–238 (SGGVDSS) contacts ATP.

Homodimer.

It carries out the reaction XMP + L-glutamine + ATP + H2O = GMP + L-glutamate + AMP + diphosphate + 2 H(+). It participates in purine metabolism; GMP biosynthesis; GMP from XMP (L-Gln route): step 1/1. Its function is as follows. Catalyzes the synthesis of GMP from XMP. In Prochlorococcus marinus (strain MIT 9303), this protein is GMP synthase [glutamine-hydrolyzing].